Consider the following 693-residue polypeptide: MAKEFLIELGTEELPPTQLRTLAEAFAANFEAELKGAELTHEGVKWYAAPRRLALKVTALAEHQADKIVEKRGPAVSAAFDADGNATKAAQGWARGCGITVDQAERMITDKGEWLLFKQEVKGQPTADIVVELAAKALAGLPIAKPMRWGNKTTQFIRPVKTLTMLMGSDLIQGEILGVASDRVIRGHRFMGEREFTIESAEQYPSILEERGKVMADYEARKAIILADAQKAAAAIGGIADLEDDLVEEVTSLVEWPVVLTAKFEEEFLKVPAEALVYTMKGDQKYFPVYTEDKQLLPNFIFVSNIESKEPRYVIEGNEKVVRPRLADAEFFFNTDRKSKLIDRLPMLENAIFQQQLGTIKDKTDRITELAGYIAEQIGADVEKSKRAGLLAKCDLMTSMVFEFTDTQGVMGMHYARHDGEAEEVAVALNEQYMPRFAGDDLPSNGVSSAVAMADKLDTIVGIFGIGQAPKGSDPFALRRASLGVLRIIVEYGYNLDLVDLVAKAKSLFAQQDGTSRLTNDNVEQEVIEFMLGRFRAWYQDEGFSVDIIQAVLARRPTKPADFDQRVKAVSHFRELEAAEALAAANKRVGNILAKFDGELAADIDLALLREDAEKVLAENVEVMTEALEPAFATGNYQEALSKLADLREPVDAFFDNVMVMADDEALKTNRLTLLNNLRNLFLQIADISLLQK.

This sequence belongs to the class-II aminoacyl-tRNA synthetase family. In terms of assembly, tetramer of two alpha and two beta subunits.

It is found in the cytoplasm. The catalysed reaction is tRNA(Gly) + glycine + ATP = glycyl-tRNA(Gly) + AMP + diphosphate. The sequence is that of Glycine--tRNA ligase beta subunit from Vibrio vulnificus (strain CMCP6).